The following is a 394-amino-acid chain: Mitogen-activated protein kinase 2 (394 aa).

The span at 1–10 (MDGPAQQTDT) shows a compositional bias: polar residues. The segment at 1-27 (MDGPAQQTDTVMAEAAAAQQPAPPSQP) is disordered. Positions 61 to 346 (KPPIMPIGKG…VEDALAHPYL (286 aa)) constitute a Protein kinase domain. ATP is bound by residues 67-75 (IGKGAYGIV) and K90. Catalysis depends on D187, which acts as the Proton acceptor. Phosphothreonine is present on T219. Positions 219-221 (TEY) match the TXY motif. At Y221 the chain carries Phosphotyrosine. Position 224 is a phosphothreonine (T224).

This sequence belongs to the protein kinase superfamily. CMGC Ser/Thr protein kinase family. MAP kinase subfamily. The cofactor is Mg(2+). Activated by cold, wounding and UV-C in a cultivar-dependent manner; phosphorylated at Tyr-221 in cv. Subicho but not in cv. Pungchon. Expressed constitutively in roots, stems, flowers and fruits of the hot pepper (cv. Subicho).

The enzyme catalyses L-seryl-[protein] + ATP = O-phospho-L-seryl-[protein] + ADP + H(+). It catalyses the reaction L-threonyl-[protein] + ATP = O-phospho-L-threonyl-[protein] + ADP + H(+). With respect to regulation, activated by threonine and tyrosine phosphorylation. Protein kinase involved in oxidative stress-mediated and innate immune MAP kinase signaling cascades. This chain is Mitogen-activated protein kinase 2, found in Capsicum annuum (Capsicum pepper).